The following is a 162-amino-acid chain: Dihydrofolate reductase type 3 (162 aa).

Positions 2–160 constitute a DHFR domain; that stretch reads LISLIAALAH…YACEFVTLSR (159 aa).

This sequence belongs to the dihydrofolate reductase family. As to quaternary structure, monomer.

It carries out the reaction (6S)-5,6,7,8-tetrahydrofolate + NADP(+) = 7,8-dihydrofolate + NADPH + H(+). It participates in cofactor biosynthesis; tetrahydrofolate biosynthesis; 5,6,7,8-tetrahydrofolate from 7,8-dihydrofolate: step 1/1. Its function is as follows. Key enzyme in folate metabolism. Catalyzes an essential reaction for de novo glycine and purine synthesis, and for DNA precursor synthesis. The chain is Dihydrofolate reductase type 3 (dhfrIII) from Salmonella typhimurium.